The following is a 220-amino-acid chain: Serine protease-like protein 51 (220 aa).

A signal peptide spans 1–16 (MFQLLIPLLLALKGHA). A Peptidase S1 domain is found at 23–220 (VQCGHRPAFP…SSKWVSSVGA (198 aa)). N-linked (GlcNAc...) asparagine glycosylation occurs at Asn-33. An intrachain disulfide couples Cys-64 to Cys-80. A glycan (N-linked (GlcNAc...) asparagine) is linked at Asn-92. Cys-157 and Cys-170 are disulfide-bonded.

It belongs to the peptidase S1 family.

The protein localises to the secreted. The sequence is that of Serine protease-like protein 51 from Homo sapiens (Human).